Consider the following 502-residue polypeptide: Probable malate:quinone oxidoreductase 1 (502 aa).

It belongs to the MQO family. Requires FAD as cofactor.

It carries out the reaction (S)-malate + a quinone = a quinol + oxaloacetate. The protein operates within carbohydrate metabolism; tricarboxylic acid cycle; oxaloacetate from (S)-malate (quinone route): step 1/1. The protein is Probable malate:quinone oxidoreductase 1 of Pseudomonas putida (strain ATCC 47054 / DSM 6125 / CFBP 8728 / NCIMB 11950 / KT2440).